Consider the following 257-residue polypeptide: Early E1A protein (257 aa).

2 disordered regions span residues 26-46 and 75-103; these read NATMGDDHPEPPTPFGTPSLH and LAAEEASSPSSDSDSSLHTPRHDRGEKEI. The interval 43-51 is interaction with RB1 in competition with E2F1; it reads PSLHDLYDL. A compositionally biased stretch (low complexity) spans 75–91; that stretch reads LAAEEASSPSSDSDSSL. The interaction with UBE2I stretch occupies residues 79 to 144; it reads EASSPSSDSD…ASHGVQAVSE (66 aa). The segment covering 94 to 103 has biased composition (basic and acidic residues); sequence PRHDRGEKEI. The PXLXP motif, interaction with host ZMYND11 motif lies at 104 to 108; the sequence is PGLKW. The LXCXE motif, interaction with host RB1 and TMEM173/STING signature appears at 113–117; that stretch reads LRCYE. A zinc finger lies at 158–178; sequence CKSCEFHRINTGDKAVLCALC. Residues 191–221 form a disordered region; sequence VSDADDETPTTESTLSPPEIGTSPSDNIVRP. A compositionally biased stretch (low complexity) spans 200-209; it reads TTESTLSPPE. The PXDLS motif, CTBP-binding motif lies at 246-250; the sequence is PLDLC. The short motif at 252–257 is the Nuclear localization signal element; it reads RKRPRH.

It belongs to the adenoviridae E1A protein family. Interacts with host UBE2I; this interaction interferes with polySUMOylation. Interacts with host RB1; this interaction induces the aberrant dissociation of RB1-E2F1 complex thereby disrupting the activity of RB1 and activating E2F1-regulated genes. Interacts with host ATF7; the interaction enhances ATF7-mediated viral transactivation activity which requires the zinc binding domains of both proteins. Isoform early E1A 32 kDa protein and isoform early E1A 26 kDa protein interact (via N-terminus) with CUL1 and E3 ubiquitin ligase RBX1; these interactions inhibit RBX1-CUL1-dependent elongation reaction of ubiquitin chains and attenuate ubiquitination of SCF(FBXW7) target proteins. Interacts (via PXLXP motif) with host ZMYND11/BS69 (via MYND-type zinc finger); this interaction inhibits E1A mediated transactivation. Interacts with host EP300; this interaction stimulates the acetylation of RB1 by recruiting EP300 and RB1 into a multimeric-protein complex. Interacts with host CTBP1 and CTBP2; this interaction seems to potentiate viral replication. Interacts with host DCAF7. Interacts with host DYRK1A. Interacts with host KPNA4; this interaction allows E1A import into the host nucleus. Interacts with host EP400; this interaction stabilizes MYC. Interacts with host TBP protein; this interaction probably disrupts the TBP-TATA complex. Interacts (via LXCXE motif) with host TMEM173/STING; this interaction impairs the ability of TMEM173/STING to sense cytosolic DNA and promote the production of type I interferon (IFN-alpha and IFN-beta). Interacts (via C-terminus) with host ZBED1/hDREF (via C-terminus); the interaction is direct.

It localises to the host nucleus. Its function is as follows. Plays a role in viral genome replication by driving entry of quiescent cells into the cell cycle. Stimulation of progression from G1 to S phase allows the virus to efficiently use the cellular DNA replicating machinery to achieve viral genome replication. E1A protein has both transforming and trans-activating activities. Induces the disassembly of the E2F1 transcription factor from RB1 by direct competition for the same binding site on RB1, with subsequent transcriptional activation of E2F1-regulated S-phase genes and of the E2 region of the adenoviral genome. Release of E2F1 leads to the ARF-mediated inhibition of MDM2 and causes TP53/p53 to accumulate because it is not targeted for degradation by MDM2-mediated ubiquitination anymore. This increase in TP53, in turn, would arrest the cell proliferation and direct its death but this effect is counteracted by the viral protein E1B-55K. Inactivation of the ability of RB1 to arrest the cell cycle is critical for cellular transformation, uncontrolled cellular growth and proliferation induced by viral infection. Interaction with RBX1 and CUL1 inhibits ubiquitination of the proteins targeted by SCF(FBXW7) ubiquitin ligase complex, and may be linked to unregulated host cell proliferation. The tumorigenesis-restraining activity of E1A may be related to the disruption of the host CtBP-CtIP complex through the CtBP binding motif. Interaction with host TMEM173/STING impairs the ability of TMEM173/STING to sense cytosolic DNA and promote the production of type I interferon (IFN-alpha and IFN-beta). Promotes the sumoylation of host ZBED1/hDREF with SUMO1. The protein is Early E1A protein of Human adenovirus E serotype 4 (HAdV-4).